The primary structure comprises 228 residues: ATP synthase subunit a 2 (228 aa).

6 consecutive transmembrane segments (helical) span residues 16-36, 74-94, 103-123, 139-159, 173-193, and 194-214; these read VGTTVVTTWGIMVVLSLGAWL, VFPFVATLWLFIGIANLSSLI, DLSATTALALLVFFSVHWFGI, SPFLLPFHVIGEITRTLALAV, LLVLLVAGLFAPIPLLMLHIV, and EALVQAYIFGMLTLVYIAGAI.

The protein belongs to the ATPase A chain family. As to quaternary structure, F-type ATPases have 2 components, CF(1) - the catalytic core - and CF(0) - the membrane proton channel. CF(1) has five subunits: alpha(3), beta(3), gamma(1), delta(1), epsilon(1). CF(0) has three main subunits: a(1), b(2) and c(9-12). The alpha and beta chains form an alternating ring which encloses part of the gamma chain. CF(1) is attached to CF(0) by a central stalk formed by the gamma and epsilon chains, while a peripheral stalk is formed by the delta and b chains.

It is found in the cell inner membrane. In terms of biological role, key component of the proton channel; it plays a direct role in the translocation of protons across the membrane. This is ATP synthase subunit a 2 from Pelobacter propionicus (strain DSM 2379 / NBRC 103807 / OttBd1).